Consider the following 84-residue polypeptide: Mu-conotoxin-like Cal 12.2b (84 aa).

The N-terminal stretch at 1–19 (MKLTCVLVVLLLVLPFGDL) is a signal peptide. A propeptide spanning residues 20–42 (ITTSNTEDNKRGATPWQNSLKAR) is cleaved from the precursor. Disulfide bonds link Cys-45/Cys-57, Cys-52/Cys-65, Cys-59/Cys-70, and Cys-64/Cys-76. Trp-72 bears the 6'-bromotryptophan mark. At Pro-77 the chain carries 4-hydroxyproline. A 6'-bromotryptophan modification is found at Trp-81.

It belongs to the conotoxin O1 superfamily. Expressed by the venom duct.

It localises to the secreted. In terms of biological role, mu-conotoxins block voltage-gated sodium channels. This toxin reversibly blocks voltage-gated sodium channel in cephalopods, with no alteration in the voltage dependence of sodium conductance or on the kinetics of inactivation. The sequence is that of Mu-conotoxin-like Cal 12.2b from Californiconus californicus (California cone).